We begin with the raw amino-acid sequence, 239 residues long: Pyridoxine 5'-phosphate synthase (239 aa).

Asn-7 provides a ligand contact to 3-amino-2-oxopropyl phosphate. 1-deoxy-D-xylulose 5-phosphate is bound at residue 9-10; it reads DH. Position 18 (Arg-18) interacts with 3-amino-2-oxopropyl phosphate. Catalysis depends on His-43, which acts as the Proton acceptor. 1-deoxy-D-xylulose 5-phosphate contacts are provided by Arg-45 and His-50. Catalysis depends on Glu-70, which acts as the Proton acceptor. Residue Thr-100 coordinates 1-deoxy-D-xylulose 5-phosphate. The active-site Proton donor is the His-191. 3-amino-2-oxopropyl phosphate contacts are provided by residues Gly-192 and 213-214; that span reads GH.

This sequence belongs to the PNP synthase family. As to quaternary structure, homooctamer; tetramer of dimers.

The protein resides in the cytoplasm. It catalyses the reaction 3-amino-2-oxopropyl phosphate + 1-deoxy-D-xylulose 5-phosphate = pyridoxine 5'-phosphate + phosphate + 2 H2O + H(+). It participates in cofactor biosynthesis; pyridoxine 5'-phosphate biosynthesis; pyridoxine 5'-phosphate from D-erythrose 4-phosphate: step 5/5. In terms of biological role, catalyzes the complicated ring closure reaction between the two acyclic compounds 1-deoxy-D-xylulose-5-phosphate (DXP) and 3-amino-2-oxopropyl phosphate (1-amino-acetone-3-phosphate or AAP) to form pyridoxine 5'-phosphate (PNP) and inorganic phosphate. This chain is Pyridoxine 5'-phosphate synthase, found in Gloeobacter violaceus (strain ATCC 29082 / PCC 7421).